Consider the following 496-residue polypeptide: MNEIAFLDLNEISLQSLSPMLSMMVFALFILIVGAIKKDLSRNFYCVFCIIAIFVNLGITLDFNGLSLSFWDMLLVDGISIISQIIILIASALFIPLALSTKEYFEYKIYEYYALFLFMIAGFLFMVSSNNLLIIFLGLEISSLCLYTLIALHNKAKSVEAAIKYFAMGSLSAGFFAMAIAMFYLATNSIDIARIGVAIKDLSLNQNLIILLGCVFIASAIGFKLSLIPFHTWIPDVYEGSNAPLAGYMSIVPKVAGFIVALRIFAMLEGSGISWIKDMLYIIAVLTMSLANIMALVQKDVKRMLAFSSIAHAGVVLCALVANSHEANVALFFYWIMFLFANLGAFSMLWVARCDDVVCWDKRFKHPYEKFSGLIKILPSYAVIMGIFMIALAGIPPFSVFWGKMVLISSLIKSDYVVLSLIIMINSAIAIYYYLKLIVFMFLKEPIVKDKNIYISNVSMALKVIVGVAVAGTVFAFLFSGAILEFIEHFVFASGF.

A run of 13 helical transmembrane segments spans residues 16–36 (SLSP…VGAI), 46–66 (CVFC…FNGL), 79–99 (ISII…PLAL), 116–136 (FLFM…LIIF), 166–186 (FAMG…FYLA), 208–228 (LIIL…LSLI), 245–267 (LAGY…IFAM), 278–298 (DMLY…ALVQ), 304–324 (MLAF…VANS), 331–351 (LFFY…MLWV), 382–402 (AVIM…SVFW), 422–442 (IIMI…VFMF), and 464–484 (VIVG…GAIL).

Belongs to the complex I subunit 2 family. As to quaternary structure, NDH-1 is composed of 14 different subunits. Subunits NuoA, H, J, K, L, M, N constitute the membrane sector of the complex.

The protein resides in the cell inner membrane. The enzyme catalyses a quinone + NADH + 5 H(+)(in) = a quinol + NAD(+) + 4 H(+)(out). Its function is as follows. NDH-1 shuttles electrons from NADH, via FMN and iron-sulfur (Fe-S) centers, to quinones in the respiratory chain. The immediate electron acceptor for the enzyme in this species is believed to be ubiquinone. Couples the redox reaction to proton translocation (for every two electrons transferred, four hydrogen ions are translocated across the cytoplasmic membrane), and thus conserves the redox energy in a proton gradient. The chain is NADH-quinone oxidoreductase subunit N from Campylobacter concisus (strain 13826).